We begin with the raw amino-acid sequence, 426 residues long: Anaerobic glycerol-3-phosphate dehydrogenase subunit B (426 aa).

The protein belongs to the anaerobic G-3-P dehydrogenase subunit B family. Composed of a catalytic GlpA/B dimer and of membrane bound GlpC. The cofactor is FMN.

The catalysed reaction is a quinone + sn-glycerol 3-phosphate = dihydroxyacetone phosphate + a quinol. It functions in the pathway polyol metabolism; glycerol degradation via glycerol kinase pathway; glycerone phosphate from sn-glycerol 3-phosphate (anaerobic route): step 1/1. Conversion of glycerol 3-phosphate to dihydroxyacetone. Uses fumarate or nitrate as electron acceptor. The sequence is that of Anaerobic glycerol-3-phosphate dehydrogenase subunit B from Haemophilus ducreyi (strain 35000HP / ATCC 700724).